The following is a 353-amino-acid chain: sn-glycerol-3-phosphate import ATP-binding protein UgpC (353 aa).

An ABC transporter domain is found at 4–234; the sequence is ILLNDVRKSY…PASEFVAGFI (231 aa). 36 to 43 serves as a coordination point for ATP; the sequence is GPSGCGKS.

The protein belongs to the ABC transporter superfamily. sn-glycerol-3-phosphate importer (TC 3.A.1.1.3) family. The complex is composed of two ATP-binding proteins (UgpC), two transmembrane proteins (UgpA and UgpE) and a solute-binding protein (UgpB).

Its subcellular location is the cell inner membrane. The enzyme catalyses sn-glycerol 3-phosphate(out) + ATP + H2O = sn-glycerol 3-phosphate(in) + ADP + phosphate + H(+). In terms of biological role, part of the ABC transporter complex UgpBAEC involved in sn-glycerol-3-phosphate (G3P) import. Responsible for energy coupling to the transport system. The protein is sn-glycerol-3-phosphate import ATP-binding protein UgpC of Paracoccus denitrificans (strain Pd 1222).